We begin with the raw amino-acid sequence, 148 residues long: Ubiquitin-like protein 4A (148 aa).

Residues 1 to 76 enclose the Ubiquitin-like domain; that stretch reads MQLTVKALKG…LNLMVKEQVA (76 aa).

As to quaternary structure, component of the bag6/bat3 complex.

Its subcellular location is the cytoplasm. The protein resides in the cytosol. It is found in the nucleus. Its function is as follows. As part of a cytosolic protein quality control complex, the bag6/bat3 complex, maintains misfolded and hydrophobic patches-containing proteins in a soluble state and participates in their proper delivery to the endoplasmic reticulum or alternatively can promote their sorting to the proteasome where they undergo degradation. The bag6/bat3 complex is involved in the post-translational delivery of tail-anchored/type II transmembrane proteins to the endoplasmic reticulum membrane. Similarly, the bag6/bat3 complex also functions as a sorting platform for proteins of the secretory pathway that are mislocalized to the cytosol either delivering them to the proteasome for degradation or to the endoplasmic reticulum. The bag6/bat3 complex also plays a role in the endoplasmic reticulum-associated degradation (ERAD), a quality control mechanism that eliminates unwanted proteins of the endoplasmic reticulum through their retrotranslocation to the cytosol and their targeting to the proteasome. It maintains these retrotranslocated proteins in an unfolded yet soluble state condition in the cytosol to ensure their proper delivery to the proteasome. This is Ubiquitin-like protein 4A (ubl4a) from Xenopus tropicalis (Western clawed frog).